Here is an 819-residue protein sequence, read N- to C-terminus: ATP-dependent DNA helicase PIF4 (819 aa).

A mitochondrion-targeting transit peptide spans 1–84 (MLLNSTRTLL…RQASSAGHND (84 aa)). A disordered region spans residues 76-101 (QASSAGHNDLGLQEKEKSSGDESAFS). Residue 126–133 (GGAGVGKS) participates in ATP binding. A DNA-binding region spans residues 734-754 (HIIYVAASRVKKFSQLRMINV).

It belongs to the helicase family. PIF1 subfamily. In terms of assembly, monomer. Requires Mg(2+) as cofactor.

It is found in the mitochondrion matrix. The protein resides in the kinetoplast. The catalysed reaction is Couples ATP hydrolysis with the unwinding of duplex DNA at the replication fork by translocating in the 5'-3' direction. This creates two antiparallel DNA single strands (ssDNA). The leading ssDNA polymer is the template for DNA polymerase III holoenzyme which synthesizes a continuous strand.. It carries out the reaction ATP + H2O = ADP + phosphate + H(+). Functionally, DNA-dependent ATPase and 5'-3' DNA helicase required for the maintenance of mitochondrial (kinetoplast) genome stability. The sequence is that of ATP-dependent DNA helicase PIF4 from Trypanosoma brucei brucei (strain 927/4 GUTat10.1).